The primary structure comprises 101 residues: Small ribosomal subunit protein bS18c (101 aa).

The protein belongs to the bacterial ribosomal protein bS18 family. In terms of assembly, part of the 30S ribosomal subunit.

The protein localises to the plastid. The protein resides in the chloroplast. This is Small ribosomal subunit protein bS18c from Citrus sinensis (Sweet orange).